Here is a 435-residue protein sequence, read N- to C-terminus: Maltodextrin transport system permease protein MdxF (435 aa).

The next 8 helical transmembrane spans lie at 35 to 55 (LLFL…GIQA), 73 to 93 (FMLI…MFYI), 136 to 156 (AYIM…FVAL), 199 to 219 (VIWT…TALF), 234 to 254 (IFLF…SNMF), 293 to 313 (LIMI…TGVL), 337 to 357 (HITF…QYTF), and 403 to 423 (VAAA…LIAF). The ABC transmembrane type-1 domain maps to 195 to 422 (LGWTVIWTIC…FIVIGISLIA (228 aa)).

This sequence belongs to the binding-protein-dependent transport system permease family. MalFG subfamily. As to quaternary structure, the complex is composed of two ATP-binding proteins (MsmX), two transmembrane proteins (MdxF and MdxG) and a solute-binding protein (MdxE).

Its subcellular location is the cell membrane. In terms of biological role, part of the ABC transporter complex involved in maltodextrin import. Probably responsible for the translocation of the substrate across the membrane. The chain is Maltodextrin transport system permease protein MdxF (mdxF) from Bacillus subtilis (strain 168).